The following is a 160-amino-acid chain: S-adenosylmethionine decarboxylase proenzyme (160 aa).

The active-site Schiff-base intermediate with substrate; via pyruvic acid is the Ser-73. Residue Ser-73 is modified to Pyruvic acid (Ser); by autocatalysis. The active-site Proton acceptor; for processing activity is His-78. Catalysis depends on Cys-93, which acts as the Proton donor; for catalytic activity.

The protein belongs to the prokaryotic AdoMetDC family. Type 1 subfamily. As to quaternary structure, heterotetramer of two alpha and two beta chains arranged as a dimer of alpha/beta heterodimers. Requires pyruvate as cofactor. Post-translationally, is synthesized initially as an inactive proenzyme. Formation of the active enzyme involves a self-maturation process in which the active site pyruvoyl group is generated from an internal serine residue via an autocatalytic post-translational modification. Two non-identical subunits are generated from the proenzyme in this reaction, and the pyruvate is formed at the N-terminus of the alpha chain, which is derived from the carboxyl end of the proenzyme. The post-translation cleavage follows an unusual pathway, termed non-hydrolytic serinolysis, in which the side chain hydroxyl group of the serine supplies its oxygen atom to form the C-terminus of the beta chain, while the remainder of the serine residue undergoes an oxidative deamination to produce ammonia and the pyruvoyl group blocking the N-terminus of the alpha chain.

The catalysed reaction is S-adenosyl-L-methionine + H(+) = S-adenosyl 3-(methylsulfanyl)propylamine + CO2. Its pathway is amine and polyamine biosynthesis; S-adenosylmethioninamine biosynthesis; S-adenosylmethioninamine from S-adenosyl-L-methionine: step 1/1. Catalyzes the decarboxylation of S-adenosylmethionine to S-adenosylmethioninamine (dcAdoMet), the propylamine donor required for the synthesis of the polyamines spermine and spermidine from the diamine putrescine. This chain is S-adenosylmethionine decarboxylase proenzyme, found in Pseudomonas aeruginosa (strain LESB58).